The sequence spans 239 residues: Isoprenyl transferase (239 aa).

D16 is a catalytic residue. D16 provides a ligand contact to Mg(2+). Substrate contacts are provided by residues 17–20 (GNGR), W21, R29, H33, and 61–63 (STE). N64 functions as the Proton acceptor in the catalytic mechanism. Substrate is bound by residues W65, R67, R187, and 193–195 (RLS). E206 lines the Mg(2+) pocket.

It belongs to the UPP synthase family. As to quaternary structure, homodimer. It depends on Mg(2+) as a cofactor.

Catalyzes the condensation of isopentenyl diphosphate (IPP) with allylic pyrophosphates generating different type of terpenoids. In Lactobacillus johnsonii (strain CNCM I-12250 / La1 / NCC 533), this protein is Isoprenyl transferase.